The chain runs to 340 residues: Solute-binding protein Dde_0634 (340 aa).

The N-terminal stretch at 1-29 (MKSTFAALLIMVGCLVSGALLTGSEAAAA) is a signal peptide. Residues tyrosine 99, arginine 172, 210–213 (TSLD), and tyrosine 235 contribute to the (indol-3-yl)acetate site.

Belongs to the bacterial solute-binding protein 7 family. In terms of assembly, the complex is comprised of an extracytoplasmic solute-binding protein and a heteromeric permease formed by two transmembrane proteins.

It is found in the periplasm. Its function is as follows. Solute-binding protein that binds indole-3-pyruvate and indole-3-acetate (in vitro). Can also bind D-tryptophan (in vitro), but that is probably not a physiological ligand. Probably part of a tripartite ATP-independent periplasmic (TRAP) transport system that mediates solute transport into the cytoplasm. The sequence is that of Solute-binding protein Dde_0634 from Oleidesulfovibrio alaskensis (strain ATCC BAA-1058 / DSM 17464 / G20) (Desulfovibrio alaskensis).